A 1103-amino-acid chain; its full sequence is MPGVIMNQDNINGRGLGLHDQLNGVSSAPAGSSQLGNPVGLHNGSLPTNGVQHPDSRGSDENYRTKMMLSASGDPPELQHIVQGFFPLAKLLNRSAQQCWNDLADLVAELAEIQVPSHDSNFSPISPNTKVLGNQSPENVRKKLRALEFAQKKRGEFIKLLVLSQWSRQAADVSRLIDIQNFIRTQHQAYAGALQCMGDMKRDLVRAQVANPDLNTALEVLLRGEVVSMPDLGYRPPKPLTPKSTLKKMRKINRVISTRLALHDDIPLAFQKYRVHDGRVTFVVPGEFELDLSIGEEDVTSQFFFVDIRFLFSPSPSIPAGRMLSELDIKINDTLRNGGLSECFNWLHNLILTNKINILARQASELSRSLWSNVLRSELLHRTLVLQYWASKPNTKSWLEIGIRRGPRESTIGGMRPPSLGLRWIRDGQEVNSDDVEFDTDSLSVDRLLRSAIALHISHILSSAFRRISEKLLYSNGSLSLHAYLTRTEPGDCQLDVQLTASRRLRVAIEPLSGAIVLAATPNTLERVDTDRNMDRSTIDDIVSRVGRLRCAAAIEEVESQVKMLGFISVSPRNVRIDARSLFPANVLRFSFFWHHHWERSWLLAATSSMDGDKWWVVQTPSADSVTINRSLDAAVHHASSAVRSAQVICNLLLPAEQPDYSSLADLGHCLSGFLAIYANARFLQDLQFIKIWPHLEHLRIGPGLQVPDLNIEYEATKLPEALRVALPAGFKRKTFVKKTIRLAFHGIDRCRKVAIMVAYGNLSTSFPALGDLVAEDDHSLVLQKTGTGFALRLLASPGYPVVVALLESLQRLECVLSVYEILRRKKMDARFLSLSRLGFAYGPNKELLAQLDIGETQPQLPTEMDPLKLAFRTGHLFHYRLSISFDHSNPHRRIQGPLASNLNRPTAEAGLDTLTEILSFTLPLMQALDRFMANPSRNESSIVHVTVRNATSFQIHYPYEKCRLRLVAHQHQNQPVWVLRDVLSFQDGSCEPEFKHKLQERLYNSKGTGWRGLGNGVIAEPDHIGDLLDELDRCLASTKANTTPKALDSRTSHDAPAANNQSPAIRPEKSVEAADMHGGFVNRNLQQKAGPASQKTDVITID.

Disordered stretches follow at residues 22–61 (LNGVSSAPAGSSQLGNPVGLHNGSLPTNGVQHPDSRGSDE) and 1043–1067 (TTPKALDSRTSHDAPAANNQSPAIR). A compositionally biased stretch (polar residues) spans 23–36 (NGVSSAPAGSSQLG).

Belongs to the Mediator complex subunit 14 family. As to quaternary structure, component of the Mediator complex.

The protein localises to the nucleus. Component of the Mediator complex, a coactivator involved in the regulated transcription of nearly all RNA polymerase II-dependent genes. Mediator functions as a bridge to convey information from gene-specific regulatory proteins to the basal RNA polymerase II transcription machinery. Mediator is recruited to promoters by direct interactions with regulatory proteins and serves as a scaffold for the assembly of a functional preinitiation complex with RNA polymerase II and the general transcription factors. The protein is Mediator of RNA polymerase II transcription subunit 14 (rgr1) of Emericella nidulans (strain FGSC A4 / ATCC 38163 / CBS 112.46 / NRRL 194 / M139) (Aspergillus nidulans).